The sequence spans 212 residues: UPF0111 protein PH1389 (212 aa).

The protein belongs to the UPF0111 family.

This chain is UPF0111 protein PH1389, found in Pyrococcus horikoshii (strain ATCC 700860 / DSM 12428 / JCM 9974 / NBRC 100139 / OT-3).